A 171-amino-acid polypeptide reads, in one-letter code: Large ribosomal subunit protein uL10 (171 aa).

Belongs to the universal ribosomal protein uL10 family. As to quaternary structure, part of the ribosomal stalk of the 50S ribosomal subunit. The N-terminus interacts with L11 and the large rRNA to form the base of the stalk. The C-terminus forms an elongated spine to which L12 dimers bind in a sequential fashion forming a multimeric L10(L12)X complex.

Forms part of the ribosomal stalk, playing a central role in the interaction of the ribosome with GTP-bound translation factors. The sequence is that of Large ribosomal subunit protein uL10 from Maricaulis maris (strain MCS10) (Caulobacter maris).